The following is a 221-amino-acid chain: uncharacterized protein (221 aa).

The first 26 residues, 1 to 26 (MVRLVPRAFAATVALLAAGFSPATAS), serve as a signal peptide directing secretion.

This is an uncharacterized protein from Mycobacterium tuberculosis (strain CDC 1551 / Oshkosh).